A 459-amino-acid chain; its full sequence is V-type ATP synthase beta chain (459 aa).

It belongs to the ATPase alpha/beta chains family.

Its function is as follows. Produces ATP from ADP in the presence of a proton gradient across the membrane. The V-type beta chain is a regulatory subunit. The sequence is that of V-type ATP synthase beta chain from Clostridium botulinum (strain Alaska E43 / Type E3).